The following is a 366-amino-acid chain: MSSTRRMQILRAVVEDYIRQQEPIGSGALAAKHHLGVSPATIRNDMAALEDEGYLTQPHTSAGRIPTEKGYRYFVNSLSTPIPLTAEQRESISSALSGSASLQDTLQRAARILSTITGQYAMVSAPSLSRSLMRHVELLPLAAHTLLLVTITETGRVVQRLVSTDTLPNTEQTQCICETINTHCRLLTFRQCAQSIRTLPTDSEGGFTPQLRDAIAAVFSDMENEERPNELFTSGAASLTHQHIDAASLAPLFDALEEQVVLMRLMYDLTGQPGQEGVGVAIGSETHTPGLLHASVVSSGYGQSSTPSANVEHEEYDTGTKPTMPIAVIGSIGPTHMNYAVTMAAVHAVSRYLTEFLRVGHNGWQE.

Residues 298–309 (SSGYGQSSTPSA) are compositionally biased toward polar residues. The tract at residues 298-318 (SSGYGQSSTPSANVEHEEYDT) is disordered.

The protein belongs to the HrcA family.

Negative regulator of class I heat shock genes (grpE-dnaK-dnaJ and groELS operons). Prevents heat-shock induction of these operons. The polypeptide is Heat-inducible transcription repressor HrcA (Bifidobacterium animalis subsp. lactis (strain AD011)).